Here is a 641-residue protein sequence, read N- to C-terminus: Serine/threonine-protein kinase PK-1 (641 aa).

The Protein kinase domain maps to 18-280; it reads YRVDARIAVG…ARARDARARL (263 aa). Residues 24 to 32 and Lys47 each bind ATP; that span reads IAVGGMATV. The Proton acceptor role is filled by Asp141. The tract at residues 317 to 347 is disordered; sequence LPVNEEDEGADAAHRTSRFRSPPPLPPRGRT. PASTA domains follow at residues 375-441, 442-508, 509-576, and 577-641; these read SGQF…TLSK, GPRT…LTVS, KGAP…TLSK, and GPEM…IEIR. Residues 469–494 form a disordered region; sequence KPGMSTREFSDSVPAGSVISTEPGKG.

It belongs to the protein kinase superfamily. Ser/Thr protein kinase family. Post-translationally, autophosphorylated on threonine residue(s).

It catalyses the reaction L-seryl-[protein] + ATP = O-phospho-L-seryl-[protein] + ADP + H(+). The catalysed reaction is L-threonyl-[protein] + ATP = O-phospho-L-threonyl-[protein] + ADP + H(+). The sequence is that of Serine/threonine-protein kinase PK-1 (spk1) from Streptomyces toyocaensis.